The following is a 352-amino-acid chain: Selenide, water dikinase (352 aa).

Cys23 is a catalytic residue. Residues Lys26 and 54–56 (SRD) contribute to the ATP site. Residue Asp57 participates in Mg(2+) binding. Residues Asp74, Asp97, and 145 to 147 (GHS) contribute to the ATP site. Mg(2+) is bound at residue Asp97. Asp233 provides a ligand contact to Mg(2+).

The protein belongs to the selenophosphate synthase 1 family. Class I subfamily. Homodimer. Mg(2+) serves as cofactor.

The enzyme catalyses hydrogenselenide + ATP + H2O = selenophosphate + AMP + phosphate + 2 H(+). Its function is as follows. Synthesizes selenophosphate from selenide and ATP. The protein is Selenide, water dikinase of Shewanella sp. (strain MR-4).